The following is a 194-amino-acid chain: tRNA(Phe) 7-((3-amino-3-carboxypropyl)-4-demethylwyosine(37)-N(4))-methyltransferase 1 (194 aa).

The protein belongs to the TYW3 family.

It carries out the reaction 4-demethyl-7-[(3S)-3-amino-3-carboxypropyl]wyosine(37) in tRNA(Phe) + S-adenosyl-L-methionine = 7-[(3S)-3-amino-3-carboxypropyl]wyosine(37) in tRNA(Phe) + S-adenosyl-L-homocysteine + H(+). In terms of biological role, S-adenosyl-L-methionine-dependent methyltransferase that acts as a component of the wyosine derivatives biosynthesis pathway. Probably methylates N-4 position of wybutosine-86 to produce wybutosine-72. This is tRNA(Phe) 7-((3-amino-3-carboxypropyl)-4-demethylwyosine(37)-N(4))-methyltransferase 1 from Pyrococcus abyssi (strain GE5 / Orsay).